The chain runs to 1196 residues: Nucleolar protein 6 (1196 aa).

2 disordered regions span residues 1-75 and 1140-1196; these read MPGK…VKPP and KREQ…KALK. Basic and acidic residues predominate over residues 22–31; that stretch reads HAEDHSDLEH. A compositionally biased stretch (basic residues) spans 1165–1174; the sequence is KPKKHRKRKG.

The protein belongs to the NRAP family. In terms of assembly, part of the small subunit (SSU) processome, composed of more than 70 proteins and the RNA chaperone small nucleolar RNA (snoRNA) U3.

The protein localises to the nucleus. Its subcellular location is the nucleolus. The protein resides in the chromosome. In terms of biological role, part of the small subunit (SSU) processome, first precursor of the small eukaryotic ribosomal subunit. During the assembly of the SSU processome in the nucleolus, many ribosome biogenesis factors, an RNA chaperone and ribosomal proteins associate with the nascent pre-rRNA and work in concert to generate RNA folding, modifications, rearrangements and cleavage as well as targeted degradation of pre-ribosomal RNA by the RNA exosome. The sequence is that of Nucleolar protein 6 from Drosophila sechellia (Fruit fly).